A 209-amino-acid polypeptide reads, in one-letter code: Ribosomal RNA small subunit methyltransferase G (209 aa).

S-adenosyl-L-methionine-binding positions include Gly-72, Leu-77, 123-124 (AE), and Arg-138.

The protein belongs to the methyltransferase superfamily. RNA methyltransferase RsmG family.

The protein localises to the cytoplasm. Specifically methylates the N7 position of guanine in position 518 of 16S rRNA. The protein is Ribosomal RNA small subunit methyltransferase G of Leifsonia xyli subsp. xyli (strain CTCB07).